The following is a 377-amino-acid chain: Mechanosensory abnormality protein 6 (377 aa).

Over 1-13 (MGLQSAAAHFINR) the chain is Cytoplasmic. Residues 14 to 34 (FIIWITIFMVACFLLRLLVVL) form a helical membrane-spanning segment. Residues 35–377 (DLNKRVYNHT…HCDLTHSYIT (343 aa)) lie on the Extracellular side of the membrane. A disulfide bridge connects residues Cys48 and Cys369. Residue Asn94 is glycosylated (N-linked (GlcNAc...) asparagine).

This sequence belongs to the paraoxonase family. Component of a non-voltage-gated amiloride-sensitive cation channel complex (also called the degenerin channel complex) composed of at least the mec-2, mec-4, mec-6 and mec-10 subunits; the complex mediates mechanotransduction in touch cells. Interacts with mec-2, mec-4 and mec-10. Post-translationally, glycosylated. As to expression, expressed in neurons including the six touch receptors, ventral cord motor neurons, HSN, PVD, PVC, IL1, and several neurons near the nerve ring, in the anal ganglion and in the male tail sensory rays, in muscles including the body wall, vulval, intestinal, anal depressor and sphincter muscles, and in the excretory canal.

Its subcellular location is the cell membrane. The protein localises to the cell projection. It localises to the axon. In terms of biological role, subunit of an amiloride-sensitive cation channel (degenerin channel complex) permeable for sodium, potassium, lithium and N-methylglucamine, and required for mechanosensory transduction (touch sensitivity). Interacts with degenerin channel proteins and stabilizes the channel. Plays a role in mechanosensory transduction (touch sensitivity). This chain is Mechanosensory abnormality protein 6, found in Caenorhabditis elegans.